Consider the following 308-residue polypeptide: Cytochrome b (308 aa).

A run of 4 helical transmembrane segments spans residues 1-21, 45-66, 81-101, and 146-166; these read FGSLLGICLATQIITGLLMAM, WLIRNLHANGASMFFICIYLHI, WNTGVILLLTLMATAFVGYVL, and FFALHFLLPFIITGLTLVHLT. Residues H51 and H65 each contribute to the heme b site. 2 residues coordinate heme b: H150 and H164. A ubiquinone is bound at residue H169. 3 consecutive transmembrane segments (helical) span residues 194–214, 256–276, and 288–308; these read IKDILGFMAMLLPLMSLAMFS, LGGVLALAASVLILFLIPFLH, and LSQLMFWILVANLLILTWVGS.

It belongs to the cytochrome b family. The cytochrome bc1 complex contains 11 subunits: 3 respiratory subunits (MT-CYB, CYC1 and UQCRFS1), 2 core proteins (UQCRC1 and UQCRC2) and 6 low-molecular weight proteins (UQCRH/QCR6, UQCRB/QCR7, UQCRQ/QCR8, UQCR10/QCR9, UQCR11/QCR10 and a cleavage product of UQCRFS1). This cytochrome bc1 complex then forms a dimer. It depends on heme b as a cofactor.

It localises to the mitochondrion inner membrane. Functionally, component of the ubiquinol-cytochrome c reductase complex (complex III or cytochrome b-c1 complex) that is part of the mitochondrial respiratory chain. The b-c1 complex mediates electron transfer from ubiquinol to cytochrome c. Contributes to the generation of a proton gradient across the mitochondrial membrane that is then used for ATP synthesis. The protein is Cytochrome b (MT-CYB) of Scytalopus magellanicus (Magellanic tapaculo).